The primary structure comprises 509 residues: MEEFKRYLELDRSQQHDFLYPLIFQEYIYALAHDHSLTTSSSLELEKAGYENNSSLLIVKRLIIHLITQMDHFGFFTNYSSQNPFLGHNTTLYSQILLEGFVVVVEIPFSIRIISSLDLEGKEIVKSHNFRSIHSIFPFLEDKFSHLNYVLDLLIPHSIHLEILVQTFRYWVKDASSLHLLRTFLHKYHNWTNLITPKKSRFSFSKQNKRFLFFFSNFHVYEYESILAFLRNQSSHLHSKSYRPFLDRIYFYEKRDHFVKVFTKYFQAILWSFKDPFMHYVRYQGKALLASKGTFLLMNKWNYYLVNFWQCYFYMWSQPGRIHINKLSNHYLELLGYLSSVGLNSSMVRNQMLENSFLIANVSKKFDMIVPIIPLIRSLSKAKFCNLLGHPISKPVWADLSDSDIIDRFGSIYRNISHYYSGSSKKMSLYRIKYIIKLSCARTLARKHKSTVRAFLKRVGSELLEEFFFEDEFIFSLTFPKASSSSGGLYRTRIWYLDIFCIHDLANYE.

It belongs to the intron maturase 2 family. MatK subfamily.

It is found in the plastid. Its subcellular location is the chloroplast. In terms of biological role, usually encoded in the trnK tRNA gene intron. Probably assists in splicing its own and other chloroplast group II introns. This Hottonia palustris (Water-violet) protein is Maturase K.